A 245-amino-acid chain; its full sequence is DNA repair protein RecO (245 aa).

The protein belongs to the RecO family.

Functionally, involved in DNA repair and RecF pathway recombination. The sequence is that of DNA repair protein RecO from Chromobacterium violaceum (strain ATCC 12472 / DSM 30191 / JCM 1249 / CCUG 213 / NBRC 12614 / NCIMB 9131 / NCTC 9757 / MK).